An 86-amino-acid polypeptide reads, in one-letter code: Large ribosomal subunit protein eL30 (86 aa).

This sequence belongs to the eukaryotic ribosomal protein eL30 family.

This Archaeoglobus fulgidus (strain ATCC 49558 / DSM 4304 / JCM 9628 / NBRC 100126 / VC-16) protein is Large ribosomal subunit protein eL30 (rpl30e).